Here is a 429-residue protein sequence, read N- to C-terminus: UDP-N-acetylglucosamine 1-carboxyvinyltransferase (429 aa).

22 to 23 (KN) serves as a coordination point for phosphoenolpyruvate. Arg102 contacts UDP-N-acetyl-alpha-D-glucosamine. Catalysis depends on Cys126, which acts as the Proton donor. The residue at position 126 (Cys126) is a 2-(S-cysteinyl)pyruvic acid O-phosphothioketal. Residues 171-174 (KVSV), Asp316, and Ile338 each bind UDP-N-acetyl-alpha-D-glucosamine.

The protein belongs to the EPSP synthase family. MurA subfamily.

The protein localises to the cytoplasm. It catalyses the reaction phosphoenolpyruvate + UDP-N-acetyl-alpha-D-glucosamine = UDP-N-acetyl-3-O-(1-carboxyvinyl)-alpha-D-glucosamine + phosphate. It participates in cell wall biogenesis; peptidoglycan biosynthesis. Functionally, cell wall formation. Adds enolpyruvyl to UDP-N-acetylglucosamine. This is UDP-N-acetylglucosamine 1-carboxyvinyltransferase from Azorhizobium caulinodans (strain ATCC 43989 / DSM 5975 / JCM 20966 / LMG 6465 / NBRC 14845 / NCIMB 13405 / ORS 571).